We begin with the raw amino-acid sequence, 215 residues long: Ribosome maturation factor RimP (215 aa).

Residues 180 to 215 (KDNRARKEAKKRRGEPDDDVPEGAEADATEEHEQES) form a disordered region. Positions 195–207 (PDDDVPEGAEADA) are enriched in acidic residues.

This sequence belongs to the RimP family.

Its subcellular location is the cytoplasm. Functionally, required for maturation of 30S ribosomal subunits. This is Ribosome maturation factor RimP from Mesorhizobium japonicum (strain LMG 29417 / CECT 9101 / MAFF 303099) (Mesorhizobium loti (strain MAFF 303099)).